A 492-amino-acid polypeptide reads, in one-letter code: GTPase Obg (492 aa).

One can recognise an Obg domain in the interval 2–159; the sequence is PRFVDRVVIH…RELTLELKTV (158 aa). In terms of domain architecture, OBG-type G spans 160-340; it reads ADVGLIGFPS…LIFGLWQMIS (181 aa). GTP contacts are provided by residues 166–173, 191–195, 212–215, 292–295, and 321–323; these read GFPSAGKS, FTTLV, DVPG, NKID, and STV. Residues Ser-173 and Thr-193 each coordinate Mg(2+). In terms of domain architecture, OCT spans 358-438; the sequence is PVPVDDSGFR…IGDMTFDWEP (81 aa). The tract at residues 449 to 492 is disordered; it reads SGRGTDARLERTERVGAAERKAARRQRRTGDDAERGTTERGENT. Composition is skewed to basic and acidic residues over residues 453-469 and 476-492; these read TDAR…AERK and RTGD…GENT.

The protein belongs to the TRAFAC class OBG-HflX-like GTPase superfamily. OBG GTPase family. As to quaternary structure, monomer. Mg(2+) is required as a cofactor.

The protein resides in the cytoplasm. Its function is as follows. An essential GTPase which binds GTP, GDP and possibly (p)ppGpp with moderate affinity, with high nucleotide exchange rates and a fairly low GTP hydrolysis rate. Plays a role in control of the cell cycle, stress response, ribosome biogenesis and in those bacteria that undergo differentiation, in morphogenesis control. This is GTPase Obg from Mycobacterium avium (strain 104).